Here is a 195-residue protein sequence, read N- to C-terminus: Large ribosomal subunit protein uL5 (195 aa).

The tract at residues 1–25 is disordered; sequence MARVPPPALKKDKKEKKPPKDNSKN.

Belongs to the universal ribosomal protein uL5 family. Component of the large ribosomal subunit.

The protein localises to the nucleus. Its subcellular location is the cytoplasm. Functionally, component of the ribosome, a large ribonucleoprotein complex responsible for the synthesis of proteins in the cell. The small ribosomal subunit (SSU) binds messenger RNAs (mRNAs) and translates the encoded message by selecting cognate aminoacyl-transfer RNA (tRNA) molecules. The large subunit (LSU) contains the ribosomal catalytic site termed the peptidyl transferase center (PTC), which catalyzes the formation of peptide bonds, thereby polymerizing the amino acids delivered by tRNAs into a polypeptide chain. The nascent polypeptides leave the ribosome through a tunnel in the LSU and interact with protein factors that function in enzymatic processing, targeting, and the membrane insertion of nascent chains at the exit of the ribosomal tunnel. The chain is Large ribosomal subunit protein uL5 (RpL11) from Spodoptera frugiperda (Fall armyworm).